Reading from the N-terminus, the 257-residue chain is MKKEKPLILLSNDDGVEAKGLNELIRGLRGMGEIIVMAPDGPRSGASGAITSEHPVKYYKVREEEDLTVYKCTGTPVDCVKLALHTVVPRRPDVVIGGINHGDNSSVNVHYSGTMGVVIEGCLKGISSIGYSLCNHFADADFSSSLPYIRRITEQVLEHGLPLGICLNVNFPDTASLKGVRICRQTNGAWINEWKRSLHPRGGEYFWLTGEFDNYEPEAEDSDHWALGHGYVAVTPTQIDVTAYGMMNELKNWNLEV.

Residues D13, D14, S44, and N100 each coordinate a divalent metal cation.

This sequence belongs to the SurE nucleotidase family. A divalent metal cation serves as cofactor.

It is found in the cytoplasm. The catalysed reaction is a ribonucleoside 5'-phosphate + H2O = a ribonucleoside + phosphate. Nucleotidase that shows phosphatase activity on nucleoside 5'-monophosphates. This chain is 5'-nucleotidase SurE, found in Phocaeicola vulgatus (strain ATCC 8482 / DSM 1447 / JCM 5826 / CCUG 4940 / NBRC 14291 / NCTC 11154) (Bacteroides vulgatus).